Reading from the N-terminus, the 648-residue chain is Probable potassium transport system protein Kup 1 (648 aa).

The disordered stretch occupies residues 1–31; sequence MSDAVTDADGSSAQSHAQSAGHHAVQGHGGH. Over residues 10 to 26 the composition is skewed to low complexity; that stretch reads GSSAQSHAQSAGHHAVQ. 12 helical membrane passes run 39 to 59, 73 to 93, 130 to 150, 165 to 185, 193 to 213, 243 to 263, 275 to 295, 317 to 337, 364 to 384, 394 to 414, 421 to 441, and 446 to 466; these read LAVG…LYAL, LLHI…IVTF, IILL…ITPA, PDMH…LFFI, VAAF…VLGA, FLAM…YADM, WLVF…SLLI, LLFI…SGAF, IFIP…VLVF, YGIA…VVLF, APAA…YLGA, and IPDG…LLTT.

It belongs to the HAK/KUP transporter (TC 2.A.72) family.

It is found in the cell inner membrane. It catalyses the reaction K(+)(in) + H(+)(in) = K(+)(out) + H(+)(out). In terms of biological role, transport of potassium into the cell. Likely operates as a K(+):H(+) symporter. The polypeptide is Probable potassium transport system protein Kup 1 (Novosphingobium aromaticivorans (strain ATCC 700278 / DSM 12444 / CCUG 56034 / CIP 105152 / NBRC 16084 / F199)).